Reading from the N-terminus, the 293-residue chain is Sphingolipid C4-hydroxylase sur2 (293 aa).

The next 3 helical transmembrane spans lie at 18 to 38, 68 to 88, and 127 to 147; these read LVSP…LHYI, AVLF…MFEG, and FIVP…WQYF. Residues 136-270 enclose the Fatty acid hydroxylase domain; sequence FAFFIIDSWQ…FTFWDHVLGT (135 aa).

Belongs to the sterol desaturase family.

The protein resides in the endoplasmic reticulum membrane. The protein operates within membrane lipid metabolism; sphingolipid biosynthesis. Its function is as follows. Required for hydroxylation of C-4 in the sphingoid moiety of ceramide. Involved in the response to syringomycin. The sequence is that of Sphingolipid C4-hydroxylase sur2 (sur2) from Schizosaccharomyces pombe (strain 972 / ATCC 24843) (Fission yeast).